The sequence spans 608 residues: Nuclear protein localization protein 4 homolog (608 aa).

Ala2 bears the N-acetylalanine mark. Lys179 bears the N6-acetyllysine mark. The MPN domain occupies 226–363 (IMFENHTVAD…ICRLSPDGHF (138 aa)). Residues 580-608 (TSAMWACQHCTFMNQPGTGHCEMCSLPRT) form a RanBP2-type zinc finger.

Belongs to the NPL4 family. In terms of assembly, heterodimer with UFD1. The heterodimer binds ubiquitinated proteins. The heterodimer binds to VCP and inhibits Golgi membrane fusion. Interacts with ZFAND2B; probably through VCP.

The protein resides in the cytoplasm. The protein localises to the cytosol. It localises to the endoplasmic reticulum. Its subcellular location is the nucleus. The protein operates within protein degradation; proteasomal ubiquitin-dependent pathway. In terms of biological role, the ternary complex containing UFD1, VCP and NPLOC4 binds ubiquitinated proteins and is necessary for the export of misfolded proteins from the ER to the cytoplasm, where they are degraded by the proteasome. The NPLOC4-UFD1-VCP complex regulates spindle disassembly at the end of mitosis and is necessary for the formation of a closed nuclear envelope. Acts as a negative regulator of type I interferon production via the complex formed with VCP and UFD1, which binds to RIGI and recruits RNF125 to promote ubiquitination and degradation of RIGI. The sequence is that of Nuclear protein localization protein 4 homolog (Nploc4) from Mus musculus (Mouse).